The chain runs to 84 residues: Large ribosomal subunit protein bL27 (84 aa).

The tract at residues 1-20 is disordered; that stretch reads MAHKKGGGSTKNGRDSNPKY.

The protein belongs to the bacterial ribosomal protein bL27 family.

In Prosthecochloris vibrioformis (Chlorobium vibrioforme), this protein is Large ribosomal subunit protein bL27 (rpmA).